The sequence spans 1191 residues: Major DNA-binding protein (1191 aa).

Residues 820-821 (FW) carry the Required for filament formation motif. Disordered stretches follow at residues 1122-1146 (TAAG…AADE) and 1168-1191 (AGLI…RSRL). The segment covering 1127-1142 (AAGGGGSATEGGGGGA) has biased composition (gly residues). A required for nuclear localization region spans residues 1173-1191 (GDDVRGDDEFELPSKRSRL).

It belongs to the herpesviridae major DNA-binding protein family. Homooligomers. Forms double-helical filaments necessary for the formation of replication compartments within the host nucleus. Interacts with the origin-binding protein. Interacts with the helicase primase complex; this interaction stimulates primer synthesis activity of the helicase-primase complex. Interacts with the DNA polymerase. Interacts with the alkaline exonuclease; this interaction increases its nuclease processivity.

It is found in the host nucleus. Single-stranded DNA-binding protein required for DNA replication. In terms of biological role, plays several crucial roles in viral infection. Participates in the opening of the viral DNA origin to initiate replication by interacting with the origin-binding protein. May disrupt loops, hairpins and other secondary structures present on ssDNA to reduce and eliminate pausing of viral DNA polymerase at specific sites during elongation. Promotes viral DNA recombination by performing strand-transfer, characterized by the ability to transfer a DNA strand from a linear duplex to a complementary single-stranded DNA circle. Can also catalyze the renaturation of complementary single strands. Additionally, reorganizes the host cell nucleus, leading to the formation of prereplicative sites and replication compartments. This process is driven by the protein which can form double-helical filaments in the absence of DNA. This Mus musculus (Mouse) protein is Major DNA-binding protein.